Here is a 719-residue protein sequence, read N- to C-terminus: Translation initiation factor IF-2 (719 aa).

Residues 54–67 (NKEETKPNVDEKPP) are compositionally biased toward basic and acidic residues. Disordered stretches follow at residues 54-75 (NKEETKPNVDEKPPNQDTLTDN) and 97-122 (STKNVTPNGNNKKDKKKKNKKDKRKN). Residues 109–122 (KDKKKKNKKDKRKN) are compositionally biased toward basic residues. The region spanning 221 to 390 (HRSPVVTVMG…LLVSEMSELK (170 aa)) is the tr-type G domain. Positions 230 to 237 (GHVDHGKT) are G1. 230-237 (GHVDHGKT) contacts GTP. The G2 stretch occupies residues 255–259 (GITQH). Positions 276–279 (DTPG) are G3. Residues 276-280 (DTPGH) and 330-333 (NKMD) contribute to the GTP site. Residues 330–333 (NKMD) form a G4 region. The tract at residues 366–368 (SAR) is G5.

It belongs to the TRAFAC class translation factor GTPase superfamily. Classic translation factor GTPase family. IF-2 subfamily.

Its subcellular location is the cytoplasm. One of the essential components for the initiation of protein synthesis. Protects formylmethionyl-tRNA from spontaneous hydrolysis and promotes its binding to the 30S ribosomal subunits. Also involved in the hydrolysis of GTP during the formation of the 70S ribosomal complex. The protein is Translation initiation factor IF-2 of Alkaliphilus oremlandii (strain OhILAs) (Clostridium oremlandii (strain OhILAs)).